The chain runs to 229 residues: Prolactin (229 aa).

An N-terminal signal peptide occupies residues 1–30 (MDNKGWSLKGSLLFLLLLLSDLLLCKSVAS). Cys34 and Cys41 form a disulfide bridge. The residue at position 56 (Ser56) is a Phosphoserine. An N-linked (GlcNAc...) asparagine glycan is attached at Asn61. A phosphoserine mark is found at Ser64 and Ser120. Cystine bridges form between Cys88-Cys204 and Cys221-Cys229.

This sequence belongs to the somatotropin/prolactin family. As to quaternary structure, interacts with PRLR.

The protein resides in the secreted. Prolactin acts primarily on the mammary gland by promoting lactation. This Felis catus (Cat) protein is Prolactin (PRL).